A 610-amino-acid chain; its full sequence is Elongation factor 4 (610 aa).

A tr-type G domain is found at 11 to 193; sequence ENIRNFSIIA…QIVEKVPAPS (183 aa). Residues 23–28 and 140–143 contribute to the GTP site; these read DHGKST and NKID.

The protein belongs to the TRAFAC class translation factor GTPase superfamily. Classic translation factor GTPase family. LepA subfamily.

It localises to the cell membrane. It carries out the reaction GTP + H2O = GDP + phosphate + H(+). Its function is as follows. Required for accurate and efficient protein synthesis under certain stress conditions. May act as a fidelity factor of the translation reaction, by catalyzing a one-codon backward translocation of tRNAs on improperly translocated ribosomes. Back-translocation proceeds from a post-translocation (POST) complex to a pre-translocation (PRE) complex, thus giving elongation factor G a second chance to translocate the tRNAs correctly. Binds to ribosomes in a GTP-dependent manner. This is Elongation factor 4 from Streptococcus equi subsp. zooepidemicus (strain H70).